The chain runs to 73 residues: Large ribosomal subunit protein bL31 (73 aa).

The protein belongs to the bacterial ribosomal protein bL31 family. Type A subfamily. As to quaternary structure, part of the 50S ribosomal subunit.

Binds the 23S rRNA. The polypeptide is Large ribosomal subunit protein bL31 (Dinoroseobacter shibae (strain DSM 16493 / NCIMB 14021 / DFL 12)).